A 306-amino-acid polypeptide reads, in one-letter code: 17-beta-hydroxysteroid dehydrogenase type 3 (306 aa).

44–73 (GQWAVITGAGDGIGKAYSFELARHGLNVVL) contacts NADP(+). Serine 181 contacts substrate. Tyrosine 194 acts as the Proton acceptor in catalysis.

This sequence belongs to the short-chain dehydrogenases/reductases (SDR) family. 17-beta-HSD 3 subfamily.

It localises to the endoplasmic reticulum. The catalysed reaction is a 17beta-hydroxy steroid + NADP(+) = a 17-oxo steroid + NADPH + H(+). It catalyses the reaction testosterone + NADP(+) = androst-4-ene-3,17-dione + NADPH + H(+). The enzyme catalyses 17beta-estradiol + NADP(+) = estrone + NADPH + H(+). It carries out the reaction 3beta-hydroxyandrost-5-en-17-one + NADPH + H(+) = androst-5-en-3beta,17beta-diol + NADP(+). The catalysed reaction is 17beta-hydroxy-5alpha-androstan-3-one + NADP(+) = 5alpha-androstan-3,17-dione + NADPH + H(+). It catalyses the reaction androsterone + NADPH + H(+) = 5alpha-androstane-3alpha,17beta-diol + NADP(+). The enzyme catalyses 3beta-hydroxy-5alpha-androstan-17-one + NADPH + H(+) = 5alpha-androstane-3beta,17beta-diol + NADP(+). It carries out the reaction androst-4-ene-3,11,17-trione + NADPH + H(+) = 17beta-hydroxyandrost-4-ene-3,11-dione + NADP(+). The catalysed reaction is 11beta-hydroxyandrost-4-ene-3,17-dione + NADPH + H(+) = 11beta,17beta-dihydroxyandrost-4-ene-3-one + NADP(+). The protein operates within hormone biosynthesis; testosterone biosynthesis. Its pathway is steroid metabolism. Functionally, catalyzes the conversion of 17-oxosteroids to 17beta-hydroxysteroids. Favors the reduction of androstenedione to testosterone. Testosterone is the key androgen driving male development and function. Uses NADPH while the two other EDH17B enzymes use NADH. Androgens such as epiandrosterone, dehydroepiandrosterone, androsterone and androstanedione are accepted as substrates and reduced at C-17. Can reduce 11-ketoandrostenedione as well as 11beta-hydroxyandrostenedione at C-17 to the respective testosterone forms. Plays a role in the rate-limiting-step for the maximum level of testosterone production by the testis but does not affect basal testosterone production. The polypeptide is 17-beta-hydroxysteroid dehydrogenase type 3 (Rattus norvegicus (Rat)).